Here is a 310-residue protein sequence, read N- to C-terminus: Isoflavone reductase homolog P3 (310 aa).

Residues 12-18 (GGTGYIG), Arg-37, and Lys-46 contribute to the NADP(+) site. Lys-134 (proton acceptor) is an active-site residue. Arg-138 is an NADP(+) binding site.

Belongs to the NmrA-type oxidoreductase family. Isoflavone reductase subfamily.

It is found in the cytoplasm. The sequence is that of Isoflavone reductase homolog P3 from Arabidopsis thaliana (Mouse-ear cress).